The primary structure comprises 610 residues: Sterol O-acyltransferase 1 (610 aa).

Phosphoserine is present on residues Ser21 and Ser45. Residues Ser41–Tyr81 form a disordered region. A compositionally biased stretch (basic and acidic residues) spans Glu67–Glu76. The next 5 helical transmembrane spans lie at Leu182–Ile202, Leu229–Val249, Gly264–Val284, Ile371–Tyr391, and Ile409–Met429. The FYXDWWN motif signature appears at Phe491–Asn497. A run of 2 helical transmembrane segments spans residues Ala535–Phe555 and Val590–Leu610. Residue His547 is part of the active site.

It belongs to the membrane-bound acyltransferase family. Sterol o-acyltransferase subfamily.

It is found in the endoplasmic reticulum membrane. The enzyme catalyses lanosterol + an acyl-CoA = lanosteryl ester + CoA. Functionally, sterol O-acyltransferase that catalyzes the formation of stery esters. The sequence is that of Sterol O-acyltransferase 1 from Saccharomyces cerevisiae (strain ATCC 204508 / S288c) (Baker's yeast).